Reading from the N-terminus, the 281-residue chain is Transcription factor E2F6 (281 aa).

A Glycyl lysine isopeptide (Lys-Gly) (interchain with G-Cter in SUMO2) cross-link involves residue lysine 9. Residues 50–129 mediate DNA binding; it reads YVSMRKALKV…SKNHIRWIGS (80 aa). The DEF box signature appears at 95–129; it reads KLGVRKRRVYDITNVLDGIDLVEKKSKNHIRWIGS. Residues 130–222 are dimerization; sequence DLSNFGAVPQ…PAPREDSITV (93 aa). The leucine-zipper stretch occupies residues 143–164; it reads LQEELSDLSAMEDALDELIKDC. Residues 173-281 are transcription repression; the sequence is DDKENERLAY…QSEELLEVSN (109 aa). The disordered stretch occupies residues 241–281; sequence GQTSNKRSEGVGTSSSESTHPEGPEEEENPQQSEELLEVSN.

Belongs to the E2F/DP family. Forms heterodimers with DP family members TFDP1 or TFDP2. Component of the DRTF1/E2F transcription factor complex. Part of the E2F6.com-1 complex in G0 phase composed of E2F6, MGA, MAX, TFDP1, CBX3, BAT8, EUHMTASE1, RING1, RNF2, MBLR, L3MBTL2 and YAF2. Component of some MLL1/MLL complex, at least composed of the core components KMT2A/MLL1, ASH2L, HCFC1/HCF1, WDR5 and RBBP5, as well as the facultative components BACC1, CHD8, E2F6, HSP70, INO80C, KANSL1, LAS1L, MAX, MCRS1, MGA, KAT8/MOF, PELP1, PHF20, PRP31, RING2, RUVB1/TIP49A, RUVB2/TIP49B, SENP3, TAF1, TAF4, TAF6, TAF7, TAF9 and TEX10. Expressed in all tissues examined. Highest levels in placenta, skeletal muscle, heart, ovary, kidney, small intestine and spleen.

The protein resides in the nucleus. Functionally, inhibitor of E2F-dependent transcription. Binds DNA cooperatively with DP proteins through the E2 recognition site, 5'-TTTC[CG]CGC-3'. Has a preference for the 5'-TTTCCCGC-3' E2F recognition site. E2F6 lacks the transcriptional activation and pocket protein binding domains. Appears to regulate a subset of E2F-dependent genes whose products are required for entry into the cell cycle but not for normal cell cycle progression. Represses expression of some meiosis-specific genes, including SLC25A31/ANT4. May silence expression via the recruitment of a chromatin remodeling complex containing histone H3-K9 methyltransferase activity. Overexpression delays the exit of cells from the S-phase. In Homo sapiens (Human), this protein is Transcription factor E2F6.